The chain runs to 123 residues: Small ribosomal subunit protein uS12cz/uS12cy (123 aa).

Belongs to the universal ribosomal protein uS12 family. Part of the 30S ribosomal subunit.

It localises to the plastid. Its subcellular location is the chloroplast. With S4 and S5 plays an important role in translational accuracy. Located at the interface of the 30S and 50S subunits. This is Small ribosomal subunit protein uS12cz/uS12cy (rps12-A) from Citrus sinensis (Sweet orange).